Consider the following 669-residue polypeptide: Dymeclin (669 aa).

Glycine 2 is lipidated: N-myristoyl glycine.

The protein belongs to the dymeclin family. In terms of assembly, interacts with GOLM1 and PPIB. Post-translationally, myristoylated in vitro; myristoylation is not essential for protein targeting to Golgi compartment. Expressed in most embryo-fetal and adult tissues. Abundant in primary chondrocytes, osteoblasts, cerebellum, kidney, lung, stomach, heart, pancreas and fetal brain. Very low or no expression in the spleen, thymus, esophagus, bladder and thyroid gland.

It is found in the cytoplasm. It localises to the golgi apparatus. The protein localises to the membrane. Its function is as follows. Necessary for correct organization of Golgi apparatus. Involved in bone development. In Homo sapiens (Human), this protein is Dymeclin (DYM).